Reading from the N-terminus, the 147-residue chain is Large-conductance mechanosensitive channel (147 aa).

Transmembrane regions (helical) follow at residues 8-28 and 81-101; these read FIMK…AAFG and GIFL…FMII.

The protein belongs to the MscL family. Homopentamer.

It localises to the cell inner membrane. In terms of biological role, channel that opens in response to stretch forces in the membrane lipid bilayer. May participate in the regulation of osmotic pressure changes within the cell. The protein is Large-conductance mechanosensitive channel of Trichlorobacter lovleyi (strain ATCC BAA-1151 / DSM 17278 / SZ) (Geobacter lovleyi).